The chain runs to 356 residues: Proline-rich protein 19 (356 aa).

Residues 1-12 show a composition bias toward polar residues; sequence MDTQGPVSQPFQ. Disordered regions lie at residues 1–53, 95–143, 216–255, and 312–331; these read MDTQ…RDPP, LVPG…ELSG, INSPDQVPEQERQRKQQGTKEFTFPMPYTSSMPTAHRGSL, and PSSPLLPRTSVLDWSPSPPS. Residues 19-29 are compositionally biased toward basic residues; it reads RVRRRKTRRER.

As to quaternary structure, interacts with CNTD1.

The protein localises to the nucleus. It is found in the chromosome. Functionally, promotes meiotic crossing over formation through its interaction with CNTD1 by participating in the crossover differentiation step of crossover-specific recombination intermediates. The protein is Proline-rich protein 19 of Homo sapiens (Human).